Here is a 359-residue protein sequence, read N- to C-terminus: Peptide chain release factor 1 (359 aa).

Gln-233 is subject to N5-methylglutamine.

Belongs to the prokaryotic/mitochondrial release factor family. Post-translationally, methylated by PrmC. Methylation increases the termination efficiency of RF1.

It localises to the cytoplasm. In terms of biological role, peptide chain release factor 1 directs the termination of translation in response to the peptide chain termination codons UAG and UAA. This is Peptide chain release factor 1 from Orientia tsutsugamushi (strain Ikeda) (Rickettsia tsutsugamushi).